The sequence spans 150 residues: Large ribosomal subunit protein uL15 (150 aa).

Residues 1–57 form a disordered region; it reads MTIKLESLQSNKGSRRKKMRKGRGIAAGQGASCGFGMRGQKSRSGRPTRPGFEGGQM. Over residues 13–23 the composition is skewed to basic residues; that stretch reads GSRRKKMRKGR. Residues 25–37 are compositionally biased toward gly residues; it reads IAAGQGASCGFGM.

Belongs to the universal ribosomal protein uL15 family. In terms of assembly, part of the 50S ribosomal subunit.

Its function is as follows. Binds to the 23S rRNA. This is Large ribosomal subunit protein uL15 from Prochlorococcus marinus (strain NATL1A).